Consider the following 178-residue polypeptide: ATP synthase subunit delta (178 aa).

Belongs to the ATPase delta chain family. In terms of assembly, F-type ATPases have 2 components, F(1) - the catalytic core - and F(0) - the membrane proton channel. F(1) has five subunits: alpha(3), beta(3), gamma(1), delta(1), epsilon(1). F(0) has three main subunits: a(1), b(2) and c(10-14). The alpha and beta chains form an alternating ring which encloses part of the gamma chain. F(1) is attached to F(0) by a central stalk formed by the gamma and epsilon chains, while a peripheral stalk is formed by the delta and b chains.

It localises to the cell membrane. F(1)F(0) ATP synthase produces ATP from ADP in the presence of a proton or sodium gradient. F-type ATPases consist of two structural domains, F(1) containing the extramembraneous catalytic core and F(0) containing the membrane proton channel, linked together by a central stalk and a peripheral stalk. During catalysis, ATP synthesis in the catalytic domain of F(1) is coupled via a rotary mechanism of the central stalk subunits to proton translocation. Its function is as follows. This protein is part of the stalk that links CF(0) to CF(1). It either transmits conformational changes from CF(0) to CF(1) or is implicated in proton conduction. This is ATP synthase subunit delta from Desulfitobacterium hafniense (strain Y51).